The following is a 37-amino-acid chain: Large ribosomal subunit protein bL36c (37 aa).

Belongs to the bacterial ribosomal protein bL36 family.

The protein localises to the plastid. Its subcellular location is the chloroplast. This is Large ribosomal subunit protein bL36c from Lepidium virginicum (Virginia pepperweed).